We begin with the raw amino-acid sequence, 151 residues long: Transcriptional repressor NrdR (151 aa).

A zinc finger lies at 3 to 34 (CPFCNAQDTKVIDSRLVSEGSQVRRRRSCNEC). Residues 49–139 (PRLIKSDGRR…VYRSFKDVKE (91 aa)) enclose the ATP-cone domain.

This sequence belongs to the NrdR family. The cofactor is Zn(2+).

In terms of biological role, negatively regulates transcription of bacterial ribonucleotide reductase nrd genes and operons by binding to NrdR-boxes. This Psychromonas ingrahamii (strain DSM 17664 / CCUG 51855 / 37) protein is Transcriptional repressor NrdR.